We begin with the raw amino-acid sequence, 304 residues long: MNKEIQQANHSKNINKPFTDKDSIRVSVLSEALPYIQRFANKRIVIKYGGSAMADKTLQNAVFRDLALLSSVGVQIVVVHGGGPEINQWLEKLGIKPVFLDGLRITDTETMDVVEMVLTGRVNKQIVSGINNHGRLAVGLCGIDGGLIEARTLGGGSHGLVGEVAKVNTKILSPLLEEGYVPVISSVANSSDGRSHNINADTVAGELAAALGAEKLILLTDTPGILRNENDPSSLIEKIRLSEARELIDQGIVKAGMKPKVECCIRSLAQGVNAAHIIDGRTPHSLLLEVFTDAGIGTMVMGRG.

Residues 82–83 (GG), Arg104, and Asn197 each bind substrate.

It belongs to the acetylglutamate kinase family. ArgB subfamily.

It localises to the cytoplasm. The enzyme catalyses N-acetyl-L-glutamate + ATP = N-acetyl-L-glutamyl 5-phosphate + ADP. It participates in amino-acid biosynthesis; L-arginine biosynthesis; N(2)-acetyl-L-ornithine from L-glutamate: step 2/4. In terms of biological role, catalyzes the ATP-dependent phosphorylation of N-acetyl-L-glutamate. The polypeptide is Acetylglutamate kinase (Prochlorococcus marinus (strain NATL1A)).